The chain runs to 72 residues: Large ribosomal subunit protein bL28 (72 aa).

The protein belongs to the bacterial ribosomal protein bL28 family.

In Chlorobium limicola (strain DSM 245 / NBRC 103803 / 6330), this protein is Large ribosomal subunit protein bL28.